The chain runs to 220 residues: Fructose-6-phosphate aldolase 2 (220 aa).

K85 serves as the catalytic Schiff-base intermediate with substrate.

This sequence belongs to the transaldolase family. Type 3A subfamily. As to quaternary structure, homodecamer.

The protein localises to the cytoplasm. The catalysed reaction is beta-D-fructose 6-phosphate = dihydroxyacetone + D-glyceraldehyde 3-phosphate. In terms of biological role, catalyzes the reversible formation of fructose 6-phosphate from dihydroxyacetone and D-glyceraldehyde 3-phosphate via an aldolization reaction. This is Fructose-6-phosphate aldolase 2 (fsaB) from Escherichia coli O6:H1 (strain CFT073 / ATCC 700928 / UPEC).